We begin with the raw amino-acid sequence, 349 residues long: Protein RecA (349 aa).

65–72 lines the ATP pocket; sequence GPESSGKT.

Belongs to the RecA family.

The protein localises to the cytoplasm. Functionally, can catalyze the hydrolysis of ATP in the presence of single-stranded DNA, the ATP-dependent uptake of single-stranded DNA by duplex DNA, and the ATP-dependent hybridization of homologous single-stranded DNAs. It interacts with LexA causing its activation and leading to its autocatalytic cleavage. The polypeptide is Protein RecA (Aliarcobacter butzleri (strain RM4018) (Arcobacter butzleri)).